Here is a 431-residue protein sequence, read N- to C-terminus: Asparagine--tRNA ligase (431 aa).

The protein belongs to the class-II aminoacyl-tRNA synthetase family.

It localises to the cytoplasm. The enzyme catalyses tRNA(Asn) + L-asparagine + ATP = L-asparaginyl-tRNA(Asn) + AMP + diphosphate + H(+). The chain is Asparagine--tRNA ligase from Thermococcus kodakarensis (strain ATCC BAA-918 / JCM 12380 / KOD1) (Pyrococcus kodakaraensis (strain KOD1)).